Here is a 328-residue protein sequence, read N- to C-terminus: MEAMGEWSTGLGGIYTEEADFMNQLLASYEQPCGGSSSETTATLTAYHHQGSQWNGGFCFSQESSSYSGYCAAMPRQEEDNNGMEDATINTNLYLVGEETSECDATEYSGKSLLPLETVAENHDHSMLQPENSLTTTTDEKMFNQCESSKKRTRATTTDKNKRANKARRSQKCVEMSGENENSGEEEYTEKAAGKRKTKPLKPQKTCCSDDESNGGDTFLSKEDGEDSKALNLNGKTRASRGAATDPQSLYARKRRERINERLRILQHLVPNGTKVDISTMLEEAVQYVKFLQLQIKLLSSDDLWMYAPIAYNGMDIGLDLKLNALTR.

Residues 145–248 (QCESSKKRTR…ASRGAATDPQ (104 aa)) are disordered. Over residues 220-229 (LSKEDGEDSK) the composition is skewed to basic and acidic residues. Positions 243-292 (AATDPQSLYARKRRERINERLRILQHLVPNGTKVDISTMLEEAVQYVKFL) constitute a bHLH domain.

It belongs to the bHLH protein family. In terms of assembly, homodimer.

It localises to the nucleus. The polypeptide is Transcription factor bHLH84 (BHLH84) (Arabidopsis thaliana (Mouse-ear cress)).